The chain runs to 439 residues: L-tryptophan decarboxylase (439 aa).

Belongs to the phosphatidylserine decarboxylase family.

The enzyme catalyses L-tryptophan + H(+) = tryptamine + CO2. Its pathway is secondary metabolite biosynthesis. L-tryptophan decarboxylase; part of the gene cluster that mediates the biosynthesis of psilocybin, a psychotropic tryptamine-derived natural product. The first step in the pathway is the decarboxylation of L-tryptophan to tryptamine by the decarboxylase psiD. 4-hydroxy-L-tryptophan is accepted as substrate by psiD as well. The cytochrome P450 monooxygenase psiH then converts tryptamine to 4-hydroxytryptamine. The kinase psiK catalyzes the 4-O-phosphorylation step by converting 4-hydroxytryptamine into norbaeocystin. The methyltransferase psiM then catalyzes iterative methyl transfer to the amino group of norbaeocystin to yield psilocybin via a monomethylated intermediate, baeocystin. 4-hydroxy-6-methyl-l-tryptophancan also be converted the decarboxylase PsiD, kinase PsiK, and methyltransferase PsiM into respectively 6-methyl-norbaeocystin, 6-methylbaeocystin, and 6-methylpsilocybin. This chain is L-tryptophan decarboxylase, found in Psilocybe cubensis (Psychedelic mushroom).